A 142-amino-acid polypeptide reads, in one-letter code: Small heat shock protein IbpB (142 aa).

The sHSP domain maps to 25–136; that stretch reads GQEPQGFPPY…QPQRIAIGTT (112 aa).

This sequence belongs to the small heat shock protein (HSP20) family. As to quaternary structure, homodimer. Forms homomultimers of about 100-150 subunits at optimal growth temperatures. Conformation changes to oligomers at high temperatures or high ionic concentrations. The decrease in size of the multimers is accompanied by an increase in chaperone activity.

It is found in the cytoplasm. Associates with aggregated proteins, together with IbpA, to stabilize and protect them from irreversible denaturation and extensive proteolysis during heat shock and oxidative stress. Aggregated proteins bound to the IbpAB complex are more efficiently refolded and reactivated by the ATP-dependent chaperone systems ClpB and DnaK/DnaJ/GrpE. Its activity is ATP-independent. This Serratia proteamaculans (strain 568) protein is Small heat shock protein IbpB.